A 705-amino-acid chain; its full sequence is Phosphoribosylformylglycinamidine synthase subunit PurL (705 aa).

The active site involves histidine 32. Residue tyrosine 35 coordinates ATP. Glutamate 76 contacts Mg(2+). Substrate is bound by residues 77–80 (SHNH) and arginine 99. Residue histidine 78 is the Proton acceptor of the active site. Residue aspartate 100 participates in Mg(2+) binding. Glutamine 224 lines the substrate pocket. Aspartate 252 contacts Mg(2+). Position 296 to 298 (296 to 298 (ESQ)) interacts with substrate. ATP is bound by residues aspartate 471 and glycine 508. Asparagine 509 is a binding site for Mg(2+). Substrate is bound at residue serine 511.

Belongs to the FGAMS family. In terms of assembly, monomer. Part of the FGAM synthase complex composed of 1 PurL, 1 PurQ and 2 PurS subunits.

It localises to the cytoplasm. The catalysed reaction is N(2)-formyl-N(1)-(5-phospho-beta-D-ribosyl)glycinamide + L-glutamine + ATP + H2O = 2-formamido-N(1)-(5-O-phospho-beta-D-ribosyl)acetamidine + L-glutamate + ADP + phosphate + H(+). It participates in purine metabolism; IMP biosynthesis via de novo pathway; 5-amino-1-(5-phospho-D-ribosyl)imidazole from N(2)-formyl-N(1)-(5-phospho-D-ribosyl)glycinamide: step 1/2. Its function is as follows. Part of the phosphoribosylformylglycinamidine synthase complex involved in the purines biosynthetic pathway. Catalyzes the ATP-dependent conversion of formylglycinamide ribonucleotide (FGAR) and glutamine to yield formylglycinamidine ribonucleotide (FGAM) and glutamate. The FGAM synthase complex is composed of three subunits. PurQ produces an ammonia molecule by converting glutamine to glutamate. PurL transfers the ammonia molecule to FGAR to form FGAM in an ATP-dependent manner. PurS interacts with PurQ and PurL and is thought to assist in the transfer of the ammonia molecule from PurQ to PurL. This is Phosphoribosylformylglycinamidine synthase subunit PurL from Pyrococcus horikoshii (strain ATCC 700860 / DSM 12428 / JCM 9974 / NBRC 100139 / OT-3).